Reading from the N-terminus, the 573-residue chain is Methionine--tRNA ligase (573 aa).

The 'HIGH' region motif lies at 10-20; that stretch reads PYVNSVPHLGN. Cys143, Cys146, Cys156, and Cys159 together coordinate Zn(2+). Residues 333 to 337 carry the 'KMSKS' region motif; sequence KFSKS. Lys336 contributes to the ATP binding site.

The protein belongs to the class-I aminoacyl-tRNA synthetase family. MetG type 1 subfamily. Zn(2+) is required as a cofactor.

It is found in the cytoplasm. It catalyses the reaction tRNA(Met) + L-methionine + ATP = L-methionyl-tRNA(Met) + AMP + diphosphate. Its function is as follows. Is required not only for elongation of protein synthesis but also for the initiation of all mRNA translation through initiator tRNA(fMet) aminoacylation. The chain is Methionine--tRNA ligase from Saccharolobus islandicus (strain M.14.25 / Kamchatka #1) (Sulfolobus islandicus).